Here is a 152-residue protein sequence, read N- to C-terminus: Small ribosomal subunit protein uS13 (152 aa).

This sequence belongs to the universal ribosomal protein uS13 family. In terms of assembly, component of the small ribosomal subunit.

It localises to the cytoplasm. Functionally, component of the small ribosomal subunit. The ribosome is a large ribonucleoprotein complex responsible for the synthesis of proteins in the cell. The polypeptide is Small ribosomal subunit protein uS13 (rps18) (Ictalurus punctatus (Channel catfish)).